Reading from the N-terminus, the 291-residue chain is Beta-lactamase CTX-M-6 (291 aa).

The N-terminal stretch at 1 to 28 is a signal peptide; the sequence is MMTQSIRRSMLTVMATLPLLFSSATLHA. The active-site Acyl-ester intermediate is Ser73. 237–239 contributes to the substrate binding site; that stretch reads KTG.

Belongs to the class-A beta-lactamase family.

It carries out the reaction a beta-lactam + H2O = a substituted beta-amino acid. In terms of biological role, has cefotaxime-hydrolyzing activity. The protein is Beta-lactamase CTX-M-6 (bla) of Salmonella typhimurium.